Reading from the N-terminus, the 554-residue chain is Formate--tetrahydrofolate ligase (554 aa).

An ATP-binding site is contributed by 64-71 (TPYGEGKT).

Belongs to the formate--tetrahydrofolate ligase family.

It catalyses the reaction (6S)-5,6,7,8-tetrahydrofolate + formate + ATP = (6R)-10-formyltetrahydrofolate + ADP + phosphate. The protein operates within one-carbon metabolism; tetrahydrofolate interconversion. This chain is Formate--tetrahydrofolate ligase, found in Caldicellulosiruptor saccharolyticus (strain ATCC 43494 / DSM 8903 / Tp8T 6331).